The following is a 354-amino-acid chain: Prephenate dehydrogenase (354 aa).

Residues 2–283 (KKILIIGLGL…AMEIHKGALP (282 aa)) form the Prephenate/arogenate dehydrogenase domain. An NAD(+)-binding site is contributed by 3–33 (KILIIGLGLIGSSIALGIKKAHPEFEILGSD). The ACT domain maps to 287–354 (DLFISVPDEK…IEKATDFTVV (68 aa)).

The protein belongs to the prephenate/arogenate dehydrogenase family.

The catalysed reaction is prephenate + NAD(+) = 3-(4-hydroxyphenyl)pyruvate + CO2 + NADH. The protein operates within amino-acid biosynthesis; L-tyrosine biosynthesis; (4-hydroxyphenyl)pyruvate from prephenate (NAD(+) route): step 1/1. This is Prephenate dehydrogenase (tyrA) from Lactococcus lactis subsp. cremoris (strain MG1363).